A 231-amino-acid polypeptide reads, in one-letter code: MDARNRLIVGLDVATVTEAEKLVSTLAEDVTFYKIGYQLAFAGGLEFARDLAQSGKKVFLDMKLLDIDNTVASAVENIVRMGMTMLTLHAYPKAMQAAVEAAQGSGLCLLGVTVLTSMDDQDLNDAGYQGDARSLVLKRAAQAKEKGMGGIVCSAQEAQAVRAILGSDMAIVTPGIRPAGSDAGDQKRVMTPADAIHAGSSHLVVGRPIVKADDPRAATQVILAEMQAAFT.

Substrate is bound by residues Asp-12, Lys-34, 61–70 (DMKLLDIDNT), Thr-116, Arg-177, Gln-186, Gly-206, and Arg-207. Lys-63 acts as the Proton donor in catalysis.

It belongs to the OMP decarboxylase family. Type 1 subfamily. As to quaternary structure, homodimer.

The enzyme catalyses orotidine 5'-phosphate + H(+) = UMP + CO2. Its pathway is pyrimidine metabolism; UMP biosynthesis via de novo pathway; UMP from orotate: step 2/2. Functionally, catalyzes the decarboxylation of orotidine 5'-monophosphate (OMP) to uridine 5'-monophosphate (UMP). This chain is Orotidine 5'-phosphate decarboxylase, found in Allorhizobium ampelinum (strain ATCC BAA-846 / DSM 112012 / S4) (Agrobacterium vitis (strain S4)).